Consider the following 412-residue polypeptide: uncharacterized protein (412 aa).

7 repeat units span residues 112–116, 117–121, 122–126, 127–131, 132–136, 137–141, and 142–146. The segment at 112–146 is 7 X 5 AA tandem repeats of G-[NS]-[IV]-R-[DNS]; the sequence is GSIRSGSIRSGSIRDGSIRDGSIRSGNIRDGSVRS. The span at 116 to 126 shows a compositional bias: low complexity; it reads SGSIRSGSIRD. The interval 116-208 is disordered; sequence SGSIRSGSIR…YSEKSIKPST (93 aa). A compositionally biased stretch (basic and acidic residues) spans 192–208; that stretch reads NHYAESEYSEKSIKPST.

This sequence belongs to the asfivirus B407L family.

This is an uncharacterized protein from Ornithodoros (relapsing fever ticks).